Reading from the N-terminus, the 302-residue chain is NAD kinase 2 (302 aa).

Asp78 (proton acceptor) is an active-site residue. Residues 78-79 (DG), 152-153 (NE), Asp182, 193-198 (TAYSLS), and Ala217 each bind NAD(+).

Belongs to the NAD kinase family. A divalent metal cation serves as cofactor.

It is found in the cytoplasm. It catalyses the reaction NAD(+) + ATP = ADP + NADP(+) + H(+). In terms of biological role, involved in the regulation of the intracellular balance of NAD and NADP, and is a key enzyme in the biosynthesis of NADP. Catalyzes specifically the phosphorylation on 2'-hydroxyl of the adenosine moiety of NAD to yield NADP. The protein is NAD kinase 2 of Prochlorococcus marinus (strain SARG / CCMP1375 / SS120).